The chain runs to 1284 residues: A-type inclusion protein A25 homolog (1284 aa).

The tract at residues 340–383 (KPITNTGIEEPHATGGDKEEQEQQPVKVVQSKPDDGITPYNPFE) is disordered. Residues 348-357 (EEPHATGGDK) show a composition bias toward basic and acidic residues. A run of 10 repeats spans residues 611–637 (VRRE…RNQE), 638–665 (DTQE…SGGG), 666–689 (NLTE…ECRG), 690–720 (NATE…NNAD), 721–751 (TERE…SNAD), 752–780 (MERE…GNGT), 781–811 (SSEE…ELYS), 812–842 (AYKS…KTDS), 843–871 (YYRR…TNHA), and 872–912 (KYID…REIE). Residues 611–912 (VRRELEEERR…DMDQYKREIE (302 aa)) form a 10 X approximate tandem repeats region. A disordered region spans residues 1169-1234 (PLTTEDTEPK…PPKPETPQIS (66 aa)). A compositionally biased stretch (low complexity) spans 1180–1192 (VEVVPPSSDVTEP). The segment covering 1211–1221 (SEYQTSVSQVA) has biased composition (polar residues).

The protein belongs to the poxviridae A25 protein family. As to quaternary structure, interacts (via N-terminus) with protein A26.

It is found in the virion. Its function is as follows. Structural protein that forms a matrix surrounding the mature virion (MV) through interaction with protein A26. Presence of protein A25 in the virion structurally prevents direct virus-cell fusion mechanism. The protein is A-type inclusion protein A25 homolog (ATI) of Apodemus sylvaticus (European woodmouse).